The sequence spans 385 residues: 8-amino-7-oxononanoate synthase (385 aa).

Residue arginine 27 coordinates substrate. Pyridoxal 5'-phosphate is bound at residue 105-106; that stretch reads GY. Histidine 130 is a binding site for substrate. Pyridoxal 5'-phosphate-binding positions include serine 176, 201-204, and 232-235; these read DEAH and TMSK. An N6-(pyridoxal phosphate)lysine modification is found at lysine 235. Threonine 345 provides a ligand contact to substrate.

This sequence belongs to the class-II pyridoxal-phosphate-dependent aminotransferase family. BioF subfamily. Homodimer. Pyridoxal 5'-phosphate is required as a cofactor.

It catalyses the reaction 6-carboxyhexanoyl-[ACP] + L-alanine + H(+) = (8S)-8-amino-7-oxononanoate + holo-[ACP] + CO2. Its pathway is cofactor biosynthesis; biotin biosynthesis. In terms of biological role, catalyzes the decarboxylative condensation of pimeloyl-[acyl-carrier protein] and L-alanine to produce 8-amino-7-oxononanoate (AON), [acyl-carrier protein], and carbon dioxide. In Mycobacterium leprae (strain Br4923), this protein is 8-amino-7-oxononanoate synthase.